The sequence spans 201 residues: FMN-dependent NADH:quinone oxidoreductase (201 aa).

Residues Ser-9 and 16-18 (SYS) each bind FMN.

Belongs to the azoreductase type 1 family. Homodimer. It depends on FMN as a cofactor.

It carries out the reaction 2 a quinone + NADH + H(+) = 2 a 1,4-benzosemiquinone + NAD(+). It catalyses the reaction N,N-dimethyl-1,4-phenylenediamine + anthranilate + 2 NAD(+) = 2-(4-dimethylaminophenyl)diazenylbenzoate + 2 NADH + 2 H(+). Functionally, quinone reductase that provides resistance to thiol-specific stress caused by electrophilic quinones. In terms of biological role, also exhibits azoreductase activity. Catalyzes the reductive cleavage of the azo bond in aromatic azo compounds to the corresponding amines. The polypeptide is FMN-dependent NADH:quinone oxidoreductase (Mesomycoplasma hyopneumoniae (strain 232) (Mycoplasma hyopneumoniae)).